We begin with the raw amino-acid sequence, 244 residues long: Cell division protein ZapD (244 aa).

It belongs to the ZapD family. Interacts with FtsZ.

It localises to the cytoplasm. Functionally, cell division factor that enhances FtsZ-ring assembly. Directly interacts with FtsZ and promotes bundling of FtsZ protofilaments, with a reduction in FtsZ GTPase activity. In Shewanella oneidensis (strain ATCC 700550 / JCM 31522 / CIP 106686 / LMG 19005 / NCIMB 14063 / MR-1), this protein is Cell division protein ZapD.